The following is a 664-amino-acid chain: Trifunctional UDP-glucose 4,6-dehydratase/UDP-4-keto-6-deoxy-D-glucose 3,5-epimerase/UDP-4-keto-L-rhamnose-reductase RHM3 (664 aa).

G13–A19 provides a ligand contact to NAD(+). T132 contributes to the substrate binding site. The Proton donor role is filled by D133. Active-site proton acceptor residues include E134 and Y159. G386–G392 is a binding site for NADP(+).

It in the N-terminal section; belongs to the NAD(P)-dependent epimerase/dehydratase family. dTDP-glucose dehydratase subfamily. This sequence in the C-terminal section; belongs to the dTDP-4-dehydrorhamnose reductase family. Requires NAD(+) as cofactor. NADP(+) serves as cofactor. In terms of tissue distribution, expressed in roots, stems, seedlings, and siliques. Lower expression in inflorescence tips, and leaves.

The enzyme catalyses UDP-alpha-D-glucose = UDP-4-dehydro-6-deoxy-alpha-D-glucose + H2O. The protein operates within carbohydrate biosynthesis. Trifunctional enzyme involved in UDP-beta-L-rhamnose biosynthesis, a precursor of the primary cell wall components rhamnogalacturonan I (RG-I) and rhamnogalacturonan II (RG-II). Catalyzes the dehydration of UDP-glucose to form UDP-4-dehydro-6-deoxy-D-glucose followed by the epimerization of the C3' and C5' positions of UDP-4-dehydro-6-deoxy-D-glucose to form UDP-4-keto-beta-L-rhamnose and the reduction of UDP-4-keto-beta-L-rhamnose to yield UDP-beta-L-rhamnose. This is Trifunctional UDP-glucose 4,6-dehydratase/UDP-4-keto-6-deoxy-D-glucose 3,5-epimerase/UDP-4-keto-L-rhamnose-reductase RHM3 from Arabidopsis thaliana (Mouse-ear cress).